A 161-amino-acid chain; its full sequence is MLIRGRAIVYGDKIDTDVIIPAKYLVYTDPAILGQHAMEPIDPEFPKKAKGAILVAGRAFGMGSSREQAAIALKGAGVLAVVAESFARIFYRNAINVGLPVLQAPGVRAKVREGDELEVDLTGGVVRNLTTGEAIQGKPLAGLPLEILKAGGLLQYLKNRA.

The protein belongs to the LeuD family. LeuD type 2 subfamily. Heterodimer of LeuC and LeuD.

The catalysed reaction is (2R,3S)-3-isopropylmalate = (2S)-2-isopropylmalate. It participates in amino-acid biosynthesis; L-leucine biosynthesis; L-leucine from 3-methyl-2-oxobutanoate: step 2/4. Catalyzes the isomerization between 2-isopropylmalate and 3-isopropylmalate, via the formation of 2-isopropylmaleate. This Pyrobaculum calidifontis (strain DSM 21063 / JCM 11548 / VA1) protein is 3-isopropylmalate dehydratase small subunit.